Here is a 262-residue protein sequence, read N- to C-terminus: Phosphatidylserine decarboxylase proenzyme (262 aa).

Active-site charge relay system; for autoendoproteolytic cleavage activity residues include Asp86, His142, and Ser226. Ser226 functions as the Schiff-base intermediate with substrate; via pyruvic acid; for decarboxylase activity in the catalytic mechanism. Ser226 is subject to Pyruvic acid (Ser); by autocatalysis.

Belongs to the phosphatidylserine decarboxylase family. PSD-B subfamily. Prokaryotic type I sub-subfamily. Heterodimer of a large membrane-associated beta subunit and a small pyruvoyl-containing alpha subunit. It depends on pyruvate as a cofactor. Is synthesized initially as an inactive proenzyme. Formation of the active enzyme involves a self-maturation process in which the active site pyruvoyl group is generated from an internal serine residue via an autocatalytic post-translational modification. Two non-identical subunits are generated from the proenzyme in this reaction, and the pyruvate is formed at the N-terminus of the alpha chain, which is derived from the carboxyl end of the proenzyme. The autoendoproteolytic cleavage occurs by a canonical serine protease mechanism, in which the side chain hydroxyl group of the serine supplies its oxygen atom to form the C-terminus of the beta chain, while the remainder of the serine residue undergoes an oxidative deamination to produce ammonia and the pyruvoyl prosthetic group on the alpha chain. During this reaction, the Ser that is part of the protease active site of the proenzyme becomes the pyruvoyl prosthetic group, which constitutes an essential element of the active site of the mature decarboxylase.

It localises to the cell membrane. The catalysed reaction is a 1,2-diacyl-sn-glycero-3-phospho-L-serine + H(+) = a 1,2-diacyl-sn-glycero-3-phosphoethanolamine + CO2. The protein operates within phospholipid metabolism; phosphatidylethanolamine biosynthesis; phosphatidylethanolamine from CDP-diacylglycerol: step 2/2. Functionally, catalyzes the formation of phosphatidylethanolamine (PtdEtn) from phosphatidylserine (PtdSer). This chain is Phosphatidylserine decarboxylase proenzyme, found in Bacillus cereus (strain ZK / E33L).